Consider the following 504-residue polypeptide: Mitochondrial-processing peptidase subunit alpha (504 aa).

This sequence belongs to the peptidase M16 family. In terms of assembly, heterodimer of alpha and beta subunits, forming the mitochondrial processing protease (MPP) in which subunit alpha is involved in substrate recognition and binding and subunit beta is the catalytic subunit.

It is found in the mitochondrion inner membrane. It carries out the reaction a quinol + 2 Fe(III)-[cytochrome c](out) = a quinone + 2 Fe(II)-[cytochrome c](out) + 2 H(+)(out). Substrate recognition and binding subunit of the essential mitochondrial processing protease (MPP), which cleaves the mitochondrial sequence off newly imported precursors proteins. In terms of biological role, this is a component of the ubiquinol-cytochrome c reductase complex (complex III or cytochrome b-c1 complex), which is part of the mitochondrial respiratory chain. Mediates formation of the complex between cytochromes c and c1. This is Mitochondrial-processing peptidase subunit alpha (MPP) from Solanum tuberosum (Potato).